Consider the following 100-residue polypeptide: NADH-quinone oxidoreductase subunit K 1 (100 aa).

The next 3 helical transmembrane spans lie at 3-23 (IIKA…LGVI), 28-48 (LITV…ALVA), and 60-80 (IFAF…LGLI).

Belongs to the complex I subunit 4L family. In terms of assembly, NDH-1 is composed of 14 different subunits. Subunits NuoA, H, J, K, L, M, N constitute the membrane sector of the complex.

It localises to the cell inner membrane. It catalyses the reaction a quinone + NADH + 5 H(+)(in) = a quinol + NAD(+) + 4 H(+)(out). NDH-1 shuttles electrons from NADH, via FMN and iron-sulfur (Fe-S) centers, to quinones in the respiratory chain. The immediate electron acceptor for the enzyme in this species is believed to be ubiquinone. Couples the redox reaction to proton translocation (for every two electrons transferred, four hydrogen ions are translocated across the cytoplasmic membrane), and thus conserves the redox energy in a proton gradient. The protein is NADH-quinone oxidoreductase subunit K 1 of Aquifex aeolicus (strain VF5).